We begin with the raw amino-acid sequence, 438 residues long: Na(+)/H(+) antiporter NhaA 2 (438 aa).

11 consecutive transmembrane segments (helical) span residues 21–41 (SGGI…NSPW), 66–86 (LHHW…GLEL), 102–122 (MLPI…FHFI), 130–150 (KGWG…LALL), 160–180 (IFLT…IALF), 183–203 (GELA…LIAG), 206–226 (LGVQ…VVLL), 308–328 (WVIF…VLQL), 341–361 (LGVA…FSWI), 376–396 (WMDV…SLFI), and 410–430 (AKLG…TVLS).

It belongs to the NhaA Na(+)/H(+) (TC 2.A.33) antiporter family.

The protein localises to the cell inner membrane. It catalyses the reaction Na(+)(in) + 2 H(+)(out) = Na(+)(out) + 2 H(+)(in). In terms of biological role, na(+)/H(+) antiporter that extrudes sodium in exchange for external protons. This chain is Na(+)/H(+) antiporter NhaA 2, found in Syntrophotalea carbinolica (strain DSM 2380 / NBRC 103641 / GraBd1) (Pelobacter carbinolicus).